Consider the following 376-residue polypeptide: Succinyl-diaminopimelate desuccinylase (376 aa).

His67 provides a ligand contact to Zn(2+). Residue Asp69 is part of the active site. Position 100 (Asp100) interacts with Zn(2+). Residue Glu134 is the Proton acceptor of the active site. Positions 135, 163, and 349 each coordinate Zn(2+).

The protein belongs to the peptidase M20A family. DapE subfamily. In terms of assembly, homodimer. Zn(2+) serves as cofactor. It depends on Co(2+) as a cofactor.

It catalyses the reaction N-succinyl-(2S,6S)-2,6-diaminopimelate + H2O = (2S,6S)-2,6-diaminopimelate + succinate. Its pathway is amino-acid biosynthesis; L-lysine biosynthesis via DAP pathway; LL-2,6-diaminopimelate from (S)-tetrahydrodipicolinate (succinylase route): step 3/3. Catalyzes the hydrolysis of N-succinyl-L,L-diaminopimelic acid (SDAP), forming succinate and LL-2,6-diaminopimelate (DAP), an intermediate involved in the bacterial biosynthesis of lysine and meso-diaminopimelic acid, an essential component of bacterial cell walls. The protein is Succinyl-diaminopimelate desuccinylase of Pseudoalteromonas atlantica (strain T6c / ATCC BAA-1087).